The following is a 328-amino-acid chain: MLNEFPIFDYEDIQLIPNKCVIKSRAEADTSVTLGNHTFKLPVVPANMQTILDENVAEQLAKGGYFYIMHRFDEVGRIPFIKRMHDQGLIASISVGVKDYEYDFVSQLKADAPEYITIDIAHGHADSVISMIQHIKKELPDTFVIAGNVGTPEAVRELENAGADATKVGIGPGKVCITKVKTGFGTGGWQLAALRWCAKVARKPIIADGGIRTHGDIAKSIRFGASMIMIGSLFAGHIESPGKTIEVDGEQFKEYYGSASQYQKGAYKNVEGKRILLPAKGHLQDTLTEMEQDLQSAISYAGGRQVADLKHVDYVIVKNSIWNGDASH.

C176 (thioimidate intermediate) is an active-site residue. Residue 205–228 (IIADGGIRTHGDIAKSIRFGASMI) participates in NADP(+) binding.

Belongs to the IMPDH/GMPR family. GuaC type 2 subfamily.

The catalysed reaction is IMP + NH4(+) + NADP(+) = GMP + NADPH + 2 H(+). Its function is as follows. Catalyzes the irreversible NADPH-dependent deamination of GMP to IMP. It functions in the conversion of nucleobase, nucleoside and nucleotide derivatives of G to A nucleotides, and in maintaining the intracellular balance of A and G nucleotides. This Streptococcus pneumoniae (strain CGSP14) protein is GMP reductase.